The sequence spans 231 residues: MFRKLAAECFGTFWLVFGGCGSAVLAAGFPELGIGFAGVALAFGLTVLTMAFAVGHISGGHFNPAVTIGLWAGGRFPAKEVVGYVIAQVVGGIVAAALLYLIASGKTGFDAAASGFASNGYGEHSPGGYSMLSALVVELVLSAGFLLVIHGATDKFAPAGFAPIAIGLALTLIHLISIPVTNTSVNPARSTAVAIFQGGWALEQLWFFWVVPIVGGIIGGLIYRTLLEKRN.

The next 2 membrane-spanning stretches (helical) occupy residues 9–29 and 34–54; these read CFGT…AAGF and IGFA…AFAV. An NPA 1 motif is present at residues 63 to 65; it reads NPA. The next 3 membrane-spanning stretches (helical) occupy residues 82–102, 129–149, and 156–176; these read VGYV…LYLI, YSML…LLVI, and FAPA…IHLI. The NPA 2 signature appears at 186-188; sequence NPA. The helical transmembrane segment at 202-222 threads the bilayer; it reads LEQLWFFWVVPIVGGIIGGLI.

Belongs to the MIP/aquaporin (TC 1.A.8) family. Homotetramer.

It is found in the cell inner membrane. The catalysed reaction is H2O(in) = H2O(out). In terms of biological role, channel that permits osmotically driven movement of water in both directions. It is involved in the osmoregulation and in the maintenance of cell turgor during volume expansion in rapidly growing cells. It mediates rapid entry or exit of water in response to abrupt changes in osmolarity. The chain is Aquaporin Z from Escherichia coli O157:H7.